The primary structure comprises 365 residues: Probable caffeine synthase 4 (365 aa).

Tyrosine 18 is an S-adenosyl-L-homocysteine binding site. Residue threonine 25 participates in caffeine binding. S-adenosyl-L-homocysteine contacts are provided by cysteine 61, asparagine 66, aspartate 98, leucine 99, serine 134, and phenylalanine 135. The caffeine site is built by tyrosine 152, histidine 155, and tryptophan 156. Mg(2+) is bound by residues asparagine 173, aspartate 259, phenylalanine 261, and asparagine 262. Phenylalanine 317 contributes to the caffeine binding site.

The protein belongs to the methyltransferase superfamily. Type-7 methyltransferase family. It depends on Mg(2+) as a cofactor.

It participates in alkaloid biosynthesis. In terms of biological role, may be involved in the biosynthesis of caffeine. This Camellia sinensis (Tea plant) protein is Probable caffeine synthase 4.